The primary structure comprises 156 residues: Ribosomal RNA large subunit methyltransferase H (156 aa).

S-adenosyl-L-methionine contacts are provided by residues leucine 73, glycine 104, and 123–128 (IGPLTL).

It belongs to the RNA methyltransferase RlmH family. As to quaternary structure, homodimer.

The protein resides in the cytoplasm. The enzyme catalyses pseudouridine(1915) in 23S rRNA + S-adenosyl-L-methionine = N(3)-methylpseudouridine(1915) in 23S rRNA + S-adenosyl-L-homocysteine + H(+). In terms of biological role, specifically methylates the pseudouridine at position 1915 (m3Psi1915) in 23S rRNA. This Stenotrophomonas maltophilia (strain R551-3) protein is Ribosomal RNA large subunit methyltransferase H.